We begin with the raw amino-acid sequence, 239 residues long: Leucine-rich repeat-containing protein 57 (239 aa).

A lipid anchor (N-myristoyl glycine) is attached at Gly2. LRR repeat units follow at residues 39-60 (NLRT…IIGK), 63-85 (LLKS…CNLK), 86-107 (KLET…FGQL), 109-130 (ALKT…LCCL), 132-153 (HLDV…VGEL), 154-175 (QAIE…ISCC), 177-197 (RLKV…PQSI), and 202-222 (QICL…RELE).

It localises to the membrane. This Mus musculus (Mouse) protein is Leucine-rich repeat-containing protein 57 (Lrrc57).